The sequence spans 542 residues: Chaperonin GroEL (542 aa).

ATP-binding positions include Thr29–Pro32, Asp86–Thr90, Gly413, Asn476–Ala478, and Asp492.

Belongs to the chaperonin (HSP60) family. In terms of assembly, forms a cylinder of 14 subunits composed of two heptameric rings stacked back-to-back. Interacts with the co-chaperonin GroES.

It is found in the cytoplasm. The catalysed reaction is ATP + H2O + a folded polypeptide = ADP + phosphate + an unfolded polypeptide.. Together with its co-chaperonin GroES, plays an essential role in assisting protein folding. The GroEL-GroES system forms a nano-cage that allows encapsulation of the non-native substrate proteins and provides a physical environment optimized to promote and accelerate protein folding. The sequence is that of Chaperonin GroEL from Lactococcus lactis subsp. cremoris (strain SK11).